The primary structure comprises 189 residues: Chitin synthase 2 (189 aa).

The protein belongs to the chitin synthase family. Class II subfamily.

Its subcellular location is the cell membrane. The enzyme catalyses [(1-&gt;4)-N-acetyl-beta-D-glucosaminyl](n) + UDP-N-acetyl-alpha-D-glucosamine = [(1-&gt;4)-N-acetyl-beta-D-glucosaminyl](n+1) + UDP + H(+). Polymerizes chitin, a structural polymer of the cell wall and septum, by transferring the sugar moiety of UDP-GlcNAc to the non-reducing end of the growing chitin polymer. The protein is Chitin synthase 2 (CHS2) of Xylohypha bantiana.